Here is a 423-residue protein sequence, read N- to C-terminus: Histidinol dehydrogenase (423 aa).

Tyr116, Gln177, and Asn200 together coordinate NAD(+). Ser223, Gln245, and His248 together coordinate substrate. The Zn(2+) site is built by Gln245 and His248. Active-site proton acceptor residues include Glu313 and His314. Residues His314, Asp347, Glu401, and His406 each coordinate substrate. Asp347 is a Zn(2+) binding site. His406 provides a ligand contact to Zn(2+).

It belongs to the histidinol dehydrogenase family. Zn(2+) serves as cofactor.

It catalyses the reaction L-histidinol + 2 NAD(+) + H2O = L-histidine + 2 NADH + 3 H(+). It functions in the pathway amino-acid biosynthesis; L-histidine biosynthesis; L-histidine from 5-phospho-alpha-D-ribose 1-diphosphate: step 9/9. Functionally, catalyzes the sequential NAD-dependent oxidations of L-histidinol to L-histidinaldehyde and then to L-histidine. The polypeptide is Histidinol dehydrogenase (Staphylococcus saprophyticus subsp. saprophyticus (strain ATCC 15305 / DSM 20229 / NCIMB 8711 / NCTC 7292 / S-41)).